The primary structure comprises 462 residues: tRNA(Ile)-lysidine synthase (462 aa).

26–31 contributes to the ATP binding site; it reads SGGVDS.

This sequence belongs to the tRNA(Ile)-lysidine synthase family.

It localises to the cytoplasm. It catalyses the reaction cytidine(34) in tRNA(Ile2) + L-lysine + ATP = lysidine(34) in tRNA(Ile2) + AMP + diphosphate + H(+). In terms of biological role, ligates lysine onto the cytidine present at position 34 of the AUA codon-specific tRNA(Ile) that contains the anticodon CAU, in an ATP-dependent manner. Cytidine is converted to lysidine, thus changing the amino acid specificity of the tRNA from methionine to isoleucine. This is tRNA(Ile)-lysidine synthase from Enterococcus faecalis (strain ATCC 700802 / V583).